The following is a 195-amino-acid chain: Holliday junction branch migration complex subunit RuvA (195 aa).

Residues 1 to 64 are domain I; the sequence is MIKGVEGEIT…DRAPEIYGFK (64 aa). Residues 65-137 are domain II; the sequence is DRAEYNVFLM…LYDLVKDYAV (73 aa). The interval 137-141 is flexible linker; that stretch reads VEFPK. The interval 142–195 is domain III; sequence ELSDVSEDAVGALTALGFDMTSAKLAVNEVLKEQTVENTQELVRKALRKLNKTR.

The protein belongs to the RuvA family. Homotetramer. Forms an RuvA(8)-RuvB(12)-Holliday junction (HJ) complex. HJ DNA is sandwiched between 2 RuvA tetramers; dsDNA enters through RuvA and exits via RuvB. An RuvB hexamer assembles on each DNA strand where it exits the tetramer. Each RuvB hexamer is contacted by two RuvA subunits (via domain III) on 2 adjacent RuvB subunits; this complex drives branch migration. In the full resolvosome a probable DNA-RuvA(4)-RuvB(12)-RuvC(2) complex forms which resolves the HJ.

It is found in the cytoplasm. The RuvA-RuvB-RuvC complex processes Holliday junction (HJ) DNA during genetic recombination and DNA repair, while the RuvA-RuvB complex plays an important role in the rescue of blocked DNA replication forks via replication fork reversal (RFR). RuvA specifically binds to HJ cruciform DNA, conferring on it an open structure. The RuvB hexamer acts as an ATP-dependent pump, pulling dsDNA into and through the RuvAB complex. HJ branch migration allows RuvC to scan DNA until it finds its consensus sequence, where it cleaves and resolves the cruciform DNA. The sequence is that of Holliday junction branch migration complex subunit RuvA from Kosmotoga olearia (strain ATCC BAA-1733 / DSM 21960 / TBF 19.5.1).